A 293-amino-acid polypeptide reads, in one-letter code: Ribosomal protein L11 methyltransferase (293 aa).

Thr145, Gly166, Asp188, and Asn229 together coordinate S-adenosyl-L-methionine.

This sequence belongs to the methyltransferase superfamily. PrmA family.

The protein resides in the cytoplasm. It carries out the reaction L-lysyl-[protein] + 3 S-adenosyl-L-methionine = N(6),N(6),N(6)-trimethyl-L-lysyl-[protein] + 3 S-adenosyl-L-homocysteine + 3 H(+). Functionally, methylates ribosomal protein L11. This chain is Ribosomal protein L11 methyltransferase, found in Idiomarina loihiensis (strain ATCC BAA-735 / DSM 15497 / L2-TR).